Reading from the N-terminus, the 147-residue chain is Cyanate hydratase (147 aa).

Residues R88, E91, and S114 contribute to the active site.

The protein belongs to the cyanase family.

It carries out the reaction cyanate + hydrogencarbonate + 3 H(+) = NH4(+) + 2 CO2. Catalyzes the reaction of cyanate with bicarbonate to produce ammonia and carbon dioxide. In Parasynechococcus marenigrum (strain WH8102), this protein is Cyanate hydratase.